A 401-amino-acid polypeptide reads, in one-letter code: NAD(P)H-quinone oxidoreductase subunit H, chloroplastic (401 aa).

It belongs to the complex I 49 kDa subunit family. In terms of assembly, NDH is composed of at least 16 different subunits, 5 of which are encoded in the nucleus.

The protein resides in the plastid. It localises to the chloroplast thylakoid membrane. The enzyme catalyses a plastoquinone + NADH + (n+1) H(+)(in) = a plastoquinol + NAD(+) + n H(+)(out). It catalyses the reaction a plastoquinone + NADPH + (n+1) H(+)(in) = a plastoquinol + NADP(+) + n H(+)(out). In terms of biological role, NDH shuttles electrons from NAD(P)H:plastoquinone, via FMN and iron-sulfur (Fe-S) centers, to quinones in the photosynthetic chain and possibly in a chloroplast respiratory chain. The immediate electron acceptor for the enzyme in this species is believed to be plastoquinone. Couples the redox reaction to proton translocation, and thus conserves the redox energy in a proton gradient. The chain is NAD(P)H-quinone oxidoreductase subunit H, chloroplastic from Aethionema cordifolium (Lebanon stonecress).